The chain runs to 92 residues: Acyl carrier protein AcpXL (92 aa).

The Carrier domain maps to 2–88 (TATFDKVADI…NLCAKIDELK (87 aa)). Ser37 is modified (O-(pantetheine 4'-phosphoryl)serine).

Post-translationally, 4'-phosphopantetheine is transferred from CoA to a specific serine of apo-ACP by AcpS. This modification is essential for activity because fatty acids are bound in thioester linkage to the sulfhydryl of the prosthetic group.

It is found in the cytoplasm. Its pathway is glycolipid biosynthesis; KDO(2)-lipid A biosynthesis. Its function is as follows. Carrier of the growing fatty acid chain in fatty acid biosynthesis. Is involved in the transfer of long hydroxylated fatty acids to lipid A. Is acylated predominantly with 27-hydroxyoctacosanoic acid. The polypeptide is Acyl carrier protein AcpXL (acpXL) (Rhizobium etli (strain ATCC 51251 / DSM 11541 / JCM 21823 / NBRC 15573 / CFN 42)).